Here is a 338-residue protein sequence, read N- to C-terminus: Flap endonuclease 1 (338 aa).

The interval M1–K98 is N-domain. Mg(2+) is bound by residues D27, D80, E152, E154, D173, D175, and D236. An I-domain region spans residues K116–N257. Positions H330–F338 are interaction with PCNA.

The protein belongs to the XPG/RAD2 endonuclease family. FEN1 subfamily. Interacts with PCNA. PCNA stimulates the nuclease activity without altering cleavage specificity. Mg(2+) is required as a cofactor.

In terms of biological role, structure-specific nuclease with 5'-flap endonuclease and 5'-3' exonuclease activities involved in DNA replication and repair. During DNA replication, cleaves the 5'-overhanging flap structure that is generated by displacement synthesis when DNA polymerase encounters the 5'-end of a downstream Okazaki fragment. Binds the unpaired 3'-DNA end and kinks the DNA to facilitate 5' cleavage specificity. Cleaves one nucleotide into the double-stranded DNA from the junction in flap DNA, leaving a nick for ligation. Also involved in the base excision repair (BER) pathway. Acts as a genome stabilization factor that prevents flaps from equilibrating into structures that lead to duplications and deletions. Also possesses 5'-3' exonuclease activity on nicked or gapped double-stranded DNA. This Picrophilus torridus (strain ATCC 700027 / DSM 9790 / JCM 10055 / NBRC 100828 / KAW 2/3) protein is Flap endonuclease 1.